Consider the following 484-residue polypeptide: MVRVELQAASLMNGSSAAEEPQDALVGGDACGGRRPPSVLGVRLAVPEWEVAVTAVSLSLIILITIVGNVLVVLSVFTYKPLRIVQNFFIVSLAVADLTVAVLVMPFNVAYSLIQRWVFGIVVCKMWLTCDVLCCTASILNLCAIALDRYWAITDPINYAQKRTLRRVLAMIAGVWLLSGVISSPPLIGWNDWPMEFNDTTPCQLTEEQGYVIYSSLGSFFIPLFIMTIVYVEIFIATKRRLRERAKASKLNSAMKQQMAAQAVPSSVPSHDQESVSSETNHNELPPPPAPPSKEKRRKTKKKSKKKEQAAEEGRFLAPAMVAEDSVTDNSVSVGPVARNHLAEDGYTCTTTTTTTTTTTAVTDSPRSRTASQKGSTAPPTPVQPKSIPVYQFIEEKQRISLSKERRAARTLGIIMGVFVVCWLPFFLMYVIVPFCNPSCKPSPKLVNFITWLGYINSALNPIIYTIFNLDFRRAFKKLLHFKT.

Over 1 to 54 (MVRVELQAASLMNGSSAAEEPQDALVGGDACGGRRPPSVLGVRLAVPEWEVAVT) the chain is Extracellular. Asn13 carries an N-linked (GlcNAc...) asparagine glycan. The chain crosses the membrane as a helical span at residues 55–77 (AVSLSLIILITIVGNVLVVLSVF). Residues 78 to 87 (TYKPLRIVQN) lie on the Cytoplasmic side of the membrane. Residues 88–109 (FFIVSLAVADLTVAVLVMPFNV) form a helical membrane-spanning segment. Over 110-126 (AYSLIQRWVFGIVVCKM) the chain is Extracellular. Residues Cys124 and Cys203 are joined by a disulfide bond. Residues 127–147 (WLTCDVLCCTASILNLCAIAL) traverse the membrane as a helical segment. Over 148–167 (DRYWAITDPINYAQKRTLRR) the chain is Cytoplasmic. A helical membrane pass occupies residues 168-190 (VLAMIAGVWLLSGVISSPPLIGW). Topologically, residues 191-215 (NDWPMEFNDTTPCQLTEEQGYVIYS) are extracellular. An N-linked (GlcNAc...) asparagine glycan is attached at Asn198. A helical transmembrane segment spans residues 216–237 (SLGSFFIPLFIMTIVYVEIFIA). The Cytoplasmic segment spans residues 238–411 (TKRRLRERAK…LSKERRAART (174 aa)). Residues 253 to 280 (SAMKQQMAAQAVPSSVPSHDQESVSSET) show a composition bias toward polar residues. Disordered regions lie at residues 253–322 (SAMK…PAMV) and 358–383 (TTTA…PTPV). Basic residues predominate over residues 295–306 (EKRRKTKKKSKK). Residues 361–378 (AVTDSPRSRTASQKGSTA) show a composition bias toward polar residues. The helical transmembrane segment at 412 to 433 (LGIIMGVFVVCWLPFFLMYVIV) threads the bilayer. Topologically, residues 434 to 448 (PFCNPSCKPSPKLVN) are extracellular. The helical transmembrane segment at 449–470 (FITWLGYINSALNPIIYTIFNL) threads the bilayer. Over 471-484 (DFRRAFKKLLHFKT) the chain is Cytoplasmic.

This sequence belongs to the G-protein coupled receptor 1 family. As to expression, present mainly in the central nervous system, especially in the supra- and subesophageal, thoracic and abdominal ganglia. Not found in the distal part of optic lobes.

Its subcellular location is the cell membrane. Its function is as follows. G-protein coupled receptor for tyramine, a known neurotransmitter and neuromodulator and direct precursor of octopamine. The rank order of potency for agonists of this receptor is tyramine &gt; naphazoline &gt; tolazoline &gt; DL-octopamine &gt; dopamine &gt; epinephrine &gt; 5-hydroxytryptamine. For antagonists, the rank order is yohimbine &gt; chlorpromazine &gt; mianserin &gt; phentolamine &gt; metoclopramide. The protein is Tyramine receptor 1 (GCR1) of Locusta migratoria (Migratory locust).